Reading from the N-terminus, the 215-residue chain is MTTAVVFDYGFGNVRSMVRALANLGVDTTLTSDYRQSLEADGLVVPGVGAFAACMEGLKKVDGDRVIYDRIRAGRPVLGVCVGEQIMFEHGLEHGAHAAGIGLIGGSVNLLDADVVPHMGWDTIETAPDSVLLNGVENERFYFVHSYAAMEVKPADTSRFDIDLSDSPERVSWCSYGRSRFVAAYEHGPLSATQFHPEKSGDAGSQLLKNWIATL.

Positions 3-215 (TAVVFDYGFG…QLLKNWIATL (213 aa)) constitute a Glutamine amidotransferase type-1 domain. Cys-81 acts as the Nucleophile in catalysis. Catalysis depends on residues His-196 and Glu-198.

As to quaternary structure, heterodimer of HisH and HisF.

It is found in the cytoplasm. The enzyme catalyses 5-[(5-phospho-1-deoxy-D-ribulos-1-ylimino)methylamino]-1-(5-phospho-beta-D-ribosyl)imidazole-4-carboxamide + L-glutamine = D-erythro-1-(imidazol-4-yl)glycerol 3-phosphate + 5-amino-1-(5-phospho-beta-D-ribosyl)imidazole-4-carboxamide + L-glutamate + H(+). It carries out the reaction L-glutamine + H2O = L-glutamate + NH4(+). The protein operates within amino-acid biosynthesis; L-histidine biosynthesis; L-histidine from 5-phospho-alpha-D-ribose 1-diphosphate: step 5/9. In terms of biological role, IGPS catalyzes the conversion of PRFAR and glutamine to IGP, AICAR and glutamate. The HisH subunit catalyzes the hydrolysis of glutamine to glutamate and ammonia as part of the synthesis of IGP and AICAR. The resulting ammonia molecule is channeled to the active site of HisF. The polypeptide is Imidazole glycerol phosphate synthase subunit HisH (Bifidobacterium longum (strain NCC 2705)).